The sequence spans 336 residues: Neuropeptides B/W receptor type 2 (336 aa).

The interval 1–25 (MMEATGLEGLESTSSPCPGSTGTGL) is disordered. At 1-45 (MMEATGLEGLESTSSPCPGSTGTGLSWDNGTRHNATFPEPLPALY) the chain is on the extracellular side. Residues 12 to 25 (STSSPCPGSTGTGL) are compositionally biased toward low complexity. N-linked (GlcNAc...) asparagine glycosylation is found at asparagine 29 and asparagine 34. The chain crosses the membrane as a helical span at residues 46–68 (VLLPVVYSVICAVGLVGNAAVIC). The Cytoplasmic segment spans residues 69-80 (VILRAPKMKTVT). Residues 81 to 103 (HVFILNLAIADGLFTLVLPTNIA) form a helical membrane-spanning segment. Topologically, residues 104–127 (EHLLQRWPFGEVLCKLVLAIDHCN) are extracellular. Cysteine 117 and cysteine 197 are oxidised to a cystine. The helical transmembrane segment at 128–146 (IFSSVYFLAAMSIDRYLVV) threads the bilayer. The Cytoplasmic segment spans residues 147–165 (LATARSRRMPRRTVHRAKV). A helical membrane pass occupies residues 166 to 188 (ASLCVWLGVTVAVLPFLTFAGVY). The Extracellular segment spans residues 189 to 213 (NNELQVTSCGLSFPRPERAWFQASR). Residues 214–236 (IYTLVLGFVVPMCTLCVLYADLL) traverse the membrane as a helical segment. Topologically, residues 237–256 (RRLRALRLHSGAKALGKAKR) are cytoplasmic. A helical membrane pass occupies residues 257-279 (KVSLLVLAVLAVGLLCWTPFHLA). Residues 280 to 293 (SIVALTTDLPQTPL) lie on the Extracellular side of the membrane. Residues 294–316 (VIIVSYVVTSLSYTSSCLNPFLY) traverse the membrane as a helical segment. Residues 317–336 (AFLDHSFRKSLRTACRCQGA) are Cytoplasmic-facing.

It belongs to the G-protein coupled receptor 1 family.

The protein resides in the cell membrane. In terms of biological role, interacts specifically with a number of opioid ligands. Receptor for neuropeptides B and W, which may be involved in neuroendocrine system regulation, food intake and the organization of other signals. In Bos taurus (Bovine), this protein is Neuropeptides B/W receptor type 2 (NPBWR2).